The primary structure comprises 673 residues: Potassium-transporting ATPase ATP-binding subunit (673 aa).

Transmembrane regions (helical) follow at residues 34 to 54, 65 to 85, 216 to 236, and 253 to 273; these read IMFV…YPDL, VFSI…SEAL, IALF…ILTM, and IALA…AIGI. Asp-304 (4-aspartylphosphate intermediate) is an active-site residue. Residues Asp-341, Glu-345, 370 to 377, and Lys-388 each bind ATP; that span reads FTAETRMS. The Mg(2+) site is built by Asp-511 and Asp-515. Transmembrane regions (helical) follow at residues 581–601, 609–629, and 649–669; these read FAIL…LNIM, AVLS…PIAM, and VYGL…DLII.

This sequence belongs to the cation transport ATPase (P-type) (TC 3.A.3) family. Type IA subfamily. In terms of assembly, the system is composed of three essential subunits: KdpA, KdpB and KdpC.

The protein localises to the cell membrane. It carries out the reaction K(+)(out) + ATP + H2O = K(+)(in) + ADP + phosphate + H(+). Its function is as follows. Part of the high-affinity ATP-driven potassium transport (or Kdp) system, which catalyzes the hydrolysis of ATP coupled with the electrogenic transport of potassium into the cytoplasm. This subunit is responsible for energy coupling to the transport system and for the release of the potassium ions to the cytoplasm. This chain is Potassium-transporting ATPase ATP-binding subunit, found in Staphylococcus epidermidis (strain ATCC 35984 / DSM 28319 / BCRC 17069 / CCUG 31568 / BM 3577 / RP62A).